The primary structure comprises 125 residues: Large ribosomal subunit protein bL12 (125 aa).

The protein belongs to the bacterial ribosomal protein bL12 family. As to quaternary structure, homodimer. Part of the ribosomal stalk of the 50S ribosomal subunit. Forms a multimeric L10(L12)X complex, where L10 forms an elongated spine to which 2 to 4 L12 dimers bind in a sequential fashion. Binds GTP-bound translation factors.

Its function is as follows. Forms part of the ribosomal stalk which helps the ribosome interact with GTP-bound translation factors. Is thus essential for accurate translation. The protein is Large ribosomal subunit protein bL12 of Delftia acidovorans (strain DSM 14801 / SPH-1).